We begin with the raw amino-acid sequence, 370 residues long: Aminomethyltransferase (370 aa).

The protein belongs to the GcvT family. As to quaternary structure, the glycine cleavage system is composed of four proteins: P, T, L and H.

It catalyses the reaction N(6)-[(R)-S(8)-aminomethyldihydrolipoyl]-L-lysyl-[protein] + (6S)-5,6,7,8-tetrahydrofolate = N(6)-[(R)-dihydrolipoyl]-L-lysyl-[protein] + (6R)-5,10-methylene-5,6,7,8-tetrahydrofolate + NH4(+). Its function is as follows. The glycine cleavage system catalyzes the degradation of glycine. This is Aminomethyltransferase from Clostridium botulinum (strain 657 / Type Ba4).